Consider the following 423-residue polypeptide: Anthranilate 1,2-dioxygenase large subunit (423 aa).

Residues tryptophan 53–alanine 168 form the Rieske domain. Residues cysteine 95, histidine 97, cysteine 115, and histidine 118 each contribute to the [2Fe-2S] cluster site. Residues histidine 223, histidine 228, and aspartate 370 each coordinate Fe cation.

This sequence belongs to the bacterial ring-hydroxylating dioxygenase alpha subunit family. As to quaternary structure, part of a multicomponent enzyme system composed of a reductase (AndAa), a ferredoxin (AndAb) and a two-subunit oxygenase component (AndAc and AndAd). The cofactor is Fe cation. Requires [2Fe-2S] cluster as cofactor.

It carries out the reaction anthranilate + NADH + O2 + 3 H(+) = catechol + NH4(+) + CO2 + NAD(+). The enzyme catalyses anthranilate + NADPH + O2 + 3 H(+) = catechol + NH4(+) + CO2 + NADP(+). It participates in aromatic compound metabolism; anthranilate degradation via hydroxylation; catechol from anthranilate: step 1/1. Its function is as follows. Oxygenase component of anthranilate dioxygenase multicomponent enzyme system which catalyzes the incorporation of both atoms of molecular oxygen into anthranilate to form catechol. Can also act on benzoate and salicylate but not on 2-chlorobenzoate or o-toluate. This Burkholderia cepacia (Pseudomonas cepacia) protein is Anthranilate 1,2-dioxygenase large subunit.